The sequence spans 805 residues: G-type lectin S-receptor-like serine/threonine-protein kinase SD1-29 (805 aa).

The N-terminal stretch at 1–21 (MGMVLFACLLLLIIFPTCGYA) is a signal peptide. One can recognise a Bulb-type lectin domain in the interval 22–141 (AINTSSPLSI…VSGNKLWQSF (120 aa)). Over 22-428 (AINTSSPLSI…SELAGSSRRK (407 aa)) the chain is Extracellular. Asn24, Asn50, Asn85, Asn91, and Asn248 each carry an N-linked (GlcNAc...) asparagine glycan. The 37-residue stretch at 277–313 (PENPCDLYGRCGPYGLCVRSDPPKCECLKGFVPKSDE) folds into the EGF-like domain. 2 cysteine pairs are disulfide-bonded: Cys281–Cys293 and Cys287–Cys301. N-linked (GlcNAc...) asparagine glycans are attached at residues Asn319 and Asn378. One can recognise a PAN domain in the interval 332–418 (CQAKSSMKTQ…GEFLFIRLAS (87 aa)). 2 cysteine pairs are disulfide-bonded: Cys371–Cys392 and Cys375–Cys381. Residues 429–449 (IIVGTTVSLSIFLILVFAAIM) form a helical membrane-spanning segment. Residues 450–805 (LWRYRAKQND…EMTESMIQGR (356 aa)) lie on the Cytoplasmic side of the membrane. A Protein kinase domain is found at 488-773 (FSPSNKLGQG…DLPVPKQPIF (286 aa)). ATP is bound by residues 494–502 (LGQGGFGPV) and Lys516. Phosphoserine occurs at positions 522 and 537. The tract at residues 577–594 (CLKFELDWPKRFNIIQGI) is caM-binding. Tyr600 carries the phosphotyrosine modification. Catalysis depends on Asp613, which acts as the Proton acceptor. Residues Ser617 and Ser630 each carry the phosphoserine modification. Thr647 is modified (phosphothreonine). Residues Ser690 and Ser793 each carry the phosphoserine modification.

The protein belongs to the protein kinase superfamily. Ser/Thr protein kinase family. Interacts with PUB9, PUB13, PUB14, PUB29, PUB38, PUB44 and PUB45. Interacts with PBL34, PBL35 and PBL36. Autophosphorylated at Tyr-600. Autophosphorylation at Tyr-600 is required for downstream phosphorylation of the receptor-like cytoplasmic kinase PBL34, PBL35 and PBL36, and activation of plant immunity.

Its subcellular location is the cell membrane. It carries out the reaction L-seryl-[protein] + ATP = O-phospho-L-seryl-[protein] + ADP + H(+). The catalysed reaction is L-threonyl-[protein] + ATP = O-phospho-L-threonyl-[protein] + ADP + H(+). The enzyme catalyses L-tyrosyl-[protein] + ATP = O-phospho-L-tyrosyl-[protein] + ADP + H(+). S-domain receptor protein kinase involved in lipopolysaccharide (LPS) sensing. Specifically detects LPS of Pseudomonas and Xanthomonas species. LPS are major components of the outer membrane of Gram-negative bacteria and are important microbe-associated molecular patterns (MAMPs) that trigger biphasic production of reactive oxygen species (ROS) and immune responses in plants. Seems to be only partially associated with the second LPS-triggered ROS burst. Mediates defense signaling in response to the medium-chain 3-hydroxy fatty acid 3-OH-C10:0, a pathogen-associated molecular pattern (PAMP) which induces autophosphorylation at Tyr-600. Autophosphorylation at Tyr-600 is required for downstream phosphorylation of the receptor-like cytoplasmic kinase PBL34, PBL35 and PBL36, and activation of plant immunity. In terms of biological role, (Microbial infection) Targeted by the bacterial type III effector protein tyrosine phosphatase HopAO1 from Pseudomonas syringae. HopAO1 dephosphorylates Tyr-600, which suppresses the immune response. The polypeptide is G-type lectin S-receptor-like serine/threonine-protein kinase SD1-29 (Arabidopsis thaliana (Mouse-ear cress)).